The chain runs to 360 residues: Photosystem II protein D1 1 (360 aa).

3 consecutive transmembrane segments (helical) span residues 29–46 (YIGW…TATT), 118–133 (HFLI…QWEL), and 142–156 (WICV…AATA). Histidine 118 is a chlorophyll a binding site. Tyrosine 126 provides a ligand contact to pheophytin a. [CaMn4O5] cluster is bound by residues aspartate 170 and glutamate 189. A helical transmembrane segment spans residues 197–218 (FHMLGVAGVFGGALFAAMHGSL). Histidine 198 provides a ligand contact to chlorophyll a. A quinone contacts are provided by residues histidine 215 and 264 to 265 (SF). Histidine 215 lines the Fe cation pocket. Histidine 272 contacts Fe cation. The helical transmembrane segment at 274–288 (FLGAWPVVGIWFAAL) threads the bilayer. 4 residues coordinate [CaMn4O5] cluster: histidine 332, glutamate 333, aspartate 342, and alanine 344. Positions 345–360 (SGDAQMVALNAPAIEG) are excised as a propeptide.

Belongs to the reaction center PufL/M/PsbA/D family. As to quaternary structure, PSII is composed of 1 copy each of membrane proteins PsbA, PsbB, PsbC, PsbD, PsbE, PsbF, PsbH, PsbI, PsbJ, PsbK, PsbL, PsbM, PsbT, PsbX, PsbY, PsbZ, Psb30/Ycf12, peripheral proteins PsbO, CyanoQ (PsbQ), PsbU, PsbV and a large number of cofactors. It forms dimeric complexes. The D1/D2 heterodimer binds P680, chlorophylls that are the primary electron donor of PSII, and subsequent electron acceptors. It shares a non-heme iron and each subunit binds pheophytin, quinone, additional chlorophylls, carotenoids and lipids. D1 provides most of the ligands for the Mn4-Ca-O5 cluster of the oxygen-evolving complex (OEC). There is also a Cl(-1) ion associated with D1 and D2, which is required for oxygen evolution. The PSII complex binds additional chlorophylls, carotenoids and specific lipids. serves as cofactor. Post-translationally, C-terminally processed by CtpA; processing is essential to allow assembly of the oxygen-evolving complex and photosynthetic growth. Tyr-161 forms a radical intermediate that is referred to as redox-active TyrZ, YZ or Y-Z. In terms of processing, C-terminally processed by CtpA; processing is essential to allow assembly of the oxygen-evolving complex and thus photosynthetic growth.

The protein localises to the cellular thylakoid membrane. It catalyses the reaction 2 a plastoquinone + 4 hnu + 2 H2O = 2 a plastoquinol + O2. Photosystem II (PSII) is a light-driven water:plastoquinone oxidoreductase that uses light energy to abstract electrons from H(2)O, generating O(2) and a proton gradient subsequently used for ATP formation. It consists of a core antenna complex that captures photons, and an electron transfer chain that converts photonic excitation into a charge separation. The D1/D2 (PsbA/PsbD) reaction center heterodimer binds P680, the primary electron donor of PSII as well as several subsequent electron acceptors. The sequence is that of Photosystem II protein D1 1 from Synechocystis sp. (strain ATCC 27184 / PCC 6803 / Kazusa).